The chain runs to 384 residues: Probable beta-1,3-galactosyltransferase 1 (384 aa).

The helical; Signal-anchor for type II membrane protein transmembrane segment at 21 to 43 (SVFFMCLASFCLGMFFTNRMWNI) threads the bilayer. 2 N-linked (GlcNAc...) asparagine glycosylation sites follow: Asn-73 and Asn-105.

The protein belongs to the glycosyltransferase 31 family. Mn(2+) is required as a cofactor.

The protein localises to the golgi apparatus membrane. The protein operates within protein modification; protein glycosylation. Its function is as follows. Beta-1,3-galactosyltransferase that transfers galactose from UDP-galactose to substrates with a terminal glycosyl residue. In Arabidopsis thaliana (Mouse-ear cress), this protein is Probable beta-1,3-galactosyltransferase 1 (B3GALT1).